A 207-amino-acid chain; its full sequence is Histidine biosynthesis bifunctional protein HisIE (207 aa).

Residues methionine 1–phenylalanine 117 are phosphoribosyl-AMP cyclohydrolase. The segment at leucine 118–lysine 207 is phosphoribosyl-ATP pyrophosphohydrolase.

In the N-terminal section; belongs to the PRA-CH family. The protein in the C-terminal section; belongs to the PRA-PH family.

The protein localises to the cytoplasm. It carries out the reaction 1-(5-phospho-beta-D-ribosyl)-ATP + H2O = 1-(5-phospho-beta-D-ribosyl)-5'-AMP + diphosphate + H(+). It catalyses the reaction 1-(5-phospho-beta-D-ribosyl)-5'-AMP + H2O = 1-(5-phospho-beta-D-ribosyl)-5-[(5-phospho-beta-D-ribosylamino)methylideneamino]imidazole-4-carboxamide. It functions in the pathway amino-acid biosynthesis; L-histidine biosynthesis; L-histidine from 5-phospho-alpha-D-ribose 1-diphosphate: step 2/9. Its pathway is amino-acid biosynthesis; L-histidine biosynthesis; L-histidine from 5-phospho-alpha-D-ribose 1-diphosphate: step 3/9. This Photobacterium profundum (strain SS9) protein is Histidine biosynthesis bifunctional protein HisIE.